A 271-amino-acid chain; its full sequence is DNA repair protein RecO (271 aa).

This sequence belongs to the RecO family.

Its function is as follows. Involved in DNA repair and RecF pathway recombination. The chain is DNA repair protein RecO from Rhodococcus erythropolis (strain PR4 / NBRC 100887).